The chain runs to 395 residues: Elongation factor Tu (395 aa).

A tr-type G domain is found at 10-204 (KSHVNIGTIG…AVDEYIPTPE (195 aa)). The tract at residues 19–26 (GHVDHGKT) is G1. Residue 19–26 (GHVDHGKT) coordinates GTP. Threonine 26 lines the Mg(2+) pocket. Residues 60–64 (GITIN) form a G2 region. The tract at residues 81–84 (DCPG) is G3. GTP is bound by residues 81–85 (DCPGH) and 136–139 (NKMD). A G4 region spans residues 136 to 139 (NKMD). The interval 174–176 (SAL) is G5.

It belongs to the TRAFAC class translation factor GTPase superfamily. Classic translation factor GTPase family. EF-Tu/EF-1A subfamily. Monomer.

It localises to the cytoplasm. It carries out the reaction GTP + H2O = GDP + phosphate + H(+). Functionally, GTP hydrolase that promotes the GTP-dependent binding of aminoacyl-tRNA to the A-site of ribosomes during protein biosynthesis. This chain is Elongation factor Tu, found in Enterococcus faecalis (strain ATCC 700802 / V583).